Consider the following 179-residue polypeptide: Ribosome maturation factor RimP (179 aa).

This sequence belongs to the RimP family.

The protein localises to the cytoplasm. Its function is as follows. Required for maturation of 30S ribosomal subunits. This Chlorobium chlorochromatii (strain CaD3) protein is Ribosome maturation factor RimP.